Consider the following 928-residue polypeptide: MDVGFSRTTVQTLSRSHCKNIKQKISQWEGRANGISNPEKWCPKDFGVRYNCHQEIRLKKNPIAERKSKNLDVTSRENVGLDINENTKSHDQSENENKKHEYDDTHFFKNESESNWVCSRVKEIESCKEDVLDPETSLPPGNFYTSQILWKKIEALPPDKLLNLALEHCDSSEKELNFRVLDSSYGITKSLENIYSEPEGQECGPSINPLPKPRRTFRYLSESGVTPYKERNCDKKYCENNSCAQSSLASSQEPEPKKYGGKIRGRSKRKSFEFEDIQHFRNRNSQTIREELGRNSGSALYYTQSEDNIYEDIIYPTKENPYEDIPVQPLPMWRSPSAWKLPPAKSAFKAPKLPPKPQFLHRKTMEVKNSQAYLRSKLTKDTTLPVTLTEWKLFRAGEVANTKRKNLPRLVLKIDDIFESKRGKKKVKLHSYTGKELPPTKGETSGNESDAEYLPKNRHKRLAQLQPSSKRNPHYQTLERDLIELQEQQLFELFVVVSLQKKPSGISYIPQVIQQFPGKDDHGYKQSKDMEERLKVIPKFCFPDSKDWMPTSELKSETFSFVLTGEDGSRWFGYCKKLLPVGKGKRLPEVYCMVSRLGCFNLFSKILDEVEKRREMSPALVYPFMRSVMEAPFPAPGRTITVKSYLPGAGDESIELCRPLDSRLEHVDFKCLFKCLSVCHLIRVCASLLLERRVIFVANSLSTLSKCGHAVVATLYPFTWQHTYIPVLPASMIDIVCSPTPFLIGILSCSLPQLQDLPIEEVLIVDLCADKFLQEVSDEDEILPPKLQAALMQILEERNEILTQEQNFSQDVTLNSLVSEAFVRFFVELVGHYSLNMTVTERGERVFQREPFRKSHTSRSVRHFLDLFMETQMFAGFIQDRELRKSGVKGLFEIRAIQYLETIPESEPSGMNRILRSLGSKMKFLQKK.

Disordered stretches follow at residues Lys-67–Thr-105 and Gln-245–Arg-266. Basic and acidic residues predominate over residues Glu-85–Thr-105. At Ser-271 the chain carries Phosphoserine. The interval Lys-428–Lys-456 is disordered. In terms of domain architecture, uDENN spans Glu-492–Thr-641. The region spanning Arg-663–Glu-796 is the cDENN domain. One can recognise a dDENN domain in the interval Arg-798 to Val-888.

In terms of biological role, guanine nucleotide exchange factor (GEF) which may activate RAB9A and RAB9B. Promotes the exchange of GDP to GTP, converting inactive GDP-bound Rab proteins into their active GTP-bound form. In Homo sapiens (Human), this protein is DENN domain-containing protein 2C (DENND2C).